The chain runs to 61 residues: Small ribosomal subunit protein uS14 (61 aa).

The Zn(2+) site is built by Cys24, Cys27, Cys40, and Cys43.

The protein belongs to the universal ribosomal protein uS14 family. Zinc-binding uS14 subfamily. As to quaternary structure, part of the 30S ribosomal subunit. Contacts proteins S3 and S10. Zn(2+) is required as a cofactor.

Functionally, binds 16S rRNA, required for the assembly of 30S particles and may also be responsible for determining the conformation of the 16S rRNA at the A site. This chain is Small ribosomal subunit protein uS14, found in Clostridium novyi (strain NT).